Consider the following 593-residue polypeptide: Progranulin (593 aa).

A signal peptide spans 1-17 (MWTLVSWVALTAGLVAG). N118 is a glycosylation site (N-linked (GlcNAc...) asparagine). Disulfide bonds link C126–C139 and C133–C149. N-linked (GlcNAc...) asparagine glycans are attached at residues N236 and N265. 10 cysteine pairs are disulfide-bonded: C284-C296, C290-C306, C297-C314, C307-C321, C315-C328, C322-C335, C366-C378, C372-C388, C397-C410, and C404-C416. N-linked (GlcNAc...) asparagine glycosylation is present at N368. A glycan (N-linked (GlcNAc...) asparagine) is linked at N530.

Belongs to the granulin family. As to quaternary structure, progranulin is secreted as a homodimer. Interacts with SLPI; interaction protects progranulin from proteolysis. Interacts (via region corresponding to granulin-7 peptide) with CTSD; stabilizes CTSD and increases its proteolytic activity. Interacts (via region corresponding to granulin-7 peptide) with SORT1; this interaction mediates endocytosis and lysosome delivery of progranulin; interaction occurs at the neuronal cell surface in a stressed nervous system. Interacts with PSAP; facilitates lysosomal delivery of progranulin from the extracellular space and the biosynthetic pathway. Forms a complex with PSAP and M6PR; PSAP bridges the binding between progranulin and M6PR. Forms a complex with PSAP and SORT1; progranulin bridges the interaction between PSAP and SORT1; facilitates lysosomal targeting of PSAP via SORT1; interaction enhances PSAP uptake in primary cortical neurons. Interacts (via regions corresponding to granulin-2 and granulin-7 peptides) with GBA1; this interaction prevents aggregation of GBA1-SCARB2 complex via interaction with HSPA1A upon stress. Interacts (via region corresponding to granulin-7 peptide) with HSPA1A; mediates recruitment of HSPA1A to GBA1 and prevents GBA1 aggregation in response to stress. Post-translationally, cleaved by ELANE; proteolysis is blocked by SLPI and is concentration- and time-dependent and induces CXCL8/IL-8 production; granulin-3 and granulin-4 are resistant to ELANE. Cleaved by CTSL in lysosome thus regulating the maturation and turnover of progranulin within the lysosome. As to expression, in myelogenous leukemic cell lines of promonocytic, promyelocytic, and proerythroid lineage, in fibroblasts, and very strongly in epithelial cell lines. Present in inflammatory cells and bone marrow. Highest levels in kidney.

The protein localises to the secreted. It is found in the lysosome. Its function is as follows. Secreted protein that acts as a key regulator of lysosomal function and as a growth factor involved in inflammation, wound healing and cell proliferation. Regulates protein trafficking to lysosomes, and also the activity of lysosomal enzymes. Also facilitates the acidification of lysosomes, causing degradation of mature CTSD by CTSB. In addition, functions as a wound-related growth factor that acts directly on dermal fibroblasts and endothelial cells to promote division, migration and the formation of capillary-like tubule structures. Also promotes epithelial cell proliferation by blocking TNF-mediated neutrophil activation preventing release of oxidants and proteases. Moreover, modulates inflammation in neurons by preserving neurons survival, axonal outgrowth and neuronal integrity. Promotes proliferation of the epithelial cell line A431 in culture. Functionally, inhibits epithelial cell proliferation and induces epithelial cells to secrete IL-8. In terms of biological role, stabilizes CTSD through interaction with CTSD leading to maintain its aspartic-type peptidase activity. The sequence is that of Progranulin from Homo sapiens (Human).